The chain runs to 627 residues: Zinc finger MYM-type protein 5 (627 aa).

Positions Met-1 to Arg-23 are disordered. Positions Gly-12 to Arg-23 are enriched in polar residues. Residue Lys-59 forms a Glycyl lysine isopeptide (Lys-Gly) (interchain with G-Cter in SUMO2) linkage. The tract at residues Asp-91–Asn-123 is disordered. Glycyl lysine isopeptide (Lys-Gly) (interchain with G-Cter in SUMO2) cross-links involve residues Lys-137 and Lys-195. An MYM-type 1 zinc finger spans residues His-234 to Thr-268. The MYM-type 2; degenerate zinc-finger motif lies at Gln-280–Ile-319. MYM-type zinc fingers lie at residues His-326–Tyr-354 and Lys-370–Asn-396. Residues Glu-405–Glu-429 are disordered. Residues Lys-408, Lys-427, and Lys-517 each participate in a glycyl lysine isopeptide (Lys-Gly) (interchain with G-Cter in SUMO2) cross-link.

As to quaternary structure, interacts (via N-terminal 120 amino acid region) with ETV5 (via C-terminal).

Its subcellular location is the nucleus. Functions as a transcriptional regulator. The polypeptide is Zinc finger MYM-type protein 5 (Zmym5) (Mus musculus (Mouse)).